The chain runs to 37 residues: Large ribosomal subunit protein bL36 (37 aa).

Belongs to the bacterial ribosomal protein bL36 family.

The polypeptide is Large ribosomal subunit protein bL36 (Geobacillus kaustophilus (strain HTA426)).